Here is a 179-residue protein sequence, read N- to C-terminus: uncharacterized protein (179 aa).

Basic and acidic residues predominate over residues Met1–Gly15. Residues Met1–Lys32 are disordered.

This is an uncharacterized protein from Gallus gallus (Chicken).